A 169-amino-acid chain; its full sequence is Flagellar biosynthetic protein FliU (169 aa).

It belongs to the FliB family.

Its function is as follows. Required for the secretion of flagellin and expression of motility. This is Flagellar biosynthetic protein FliU (fliU) from Salmonella muenchen.